A 298-amino-acid polypeptide reads, in one-letter code: MSIDAIIIGGPTASGKTEIAHELAKLLNTEIISADSMCVYKFMNIGTAKPSLEKRKEIKYHMIDVVLPNEYFDTYIYVEKAKSIIKQIKEKGKIPIIVGGTYLYIQALLYGLPETSEPDFRLRKKLESIANKKGLHFLYEKLKVIDKVYAEKIGKNDKKRIIRALEIFINTGKPFSSFHKWHEPTMKVLGFYTNLTQEELNKNIEKRTYYMIEQGLEVECINLLCLGYKEAMTSSQAIGYKEMIPYIEGKSSLKEAIENIIKNTKEYASRQRRWFQKTTFTPIRTIEDIKHHLQSLVL.

10–17 lines the ATP pocket; sequence GPTASGKT. 12–17 contacts substrate; it reads TASGKT. Residues 35–38 are interaction with substrate tRNA; that stretch reads DSMC.

The protein belongs to the IPP transferase family. Monomer. Mg(2+) serves as cofactor.

It carries out the reaction adenosine(37) in tRNA + dimethylallyl diphosphate = N(6)-dimethylallyladenosine(37) in tRNA + diphosphate. Its function is as follows. Catalyzes the transfer of a dimethylallyl group onto the adenine at position 37 in tRNAs that read codons beginning with uridine, leading to the formation of N6-(dimethylallyl)adenosine (i(6)A). The chain is tRNA dimethylallyltransferase from Hydrogenobaculum sp. (strain Y04AAS1).